Here is a 478-residue protein sequence, read N- to C-terminus: Membrane-bound lytic murein transglycosylase F (478 aa).

Residues 1-22 (MTRFLFAIILGFLLTACQQVTV) form the signal peptide. Positions 23-257 (EETEYVPHKL…HLNEKYFGHV (235 aa)) are non-LT domain. Residues 258 to 478 (KRFDYIDTRA…PGTLSPDKPK (221 aa)) are LT domain. E302 is an active-site residue. A disordered region spans residues 446 to 478 (SKQQNSDEEEPSDLASEDGPAPVPGTLSPDKPK). The span at 451-461 (SDEEEPSDLAS) shows a compositional bias: acidic residues.

It in the N-terminal section; belongs to the bacterial solute-binding protein 3 family. This sequence in the C-terminal section; belongs to the transglycosylase Slt family.

It is found in the cell outer membrane. It carries out the reaction Exolytic cleavage of the (1-&gt;4)-beta-glycosidic linkage between N-acetylmuramic acid (MurNAc) and N-acetylglucosamine (GlcNAc) residues in peptidoglycan, from either the reducing or the non-reducing ends of the peptidoglycan chains, with concomitant formation of a 1,6-anhydrobond in the MurNAc residue.. Murein-degrading enzyme that degrades murein glycan strands and insoluble, high-molecular weight murein sacculi, with the concomitant formation of a 1,6-anhydromuramoyl product. Lytic transglycosylases (LTs) play an integral role in the metabolism of the peptidoglycan (PG) sacculus. Their lytic action creates space within the PG sacculus to allow for its expansion as well as for the insertion of various structures such as secretion systems and flagella. This is Membrane-bound lytic murein transglycosylase F from Shewanella sp. (strain MR-4).